The primary structure comprises 455 residues: Protein indeterminate-domain 7 (455 aa).

The segment at 1 to 52 (MMMNRDILFHQQQQQQMEENMSNLTSASGDQASVSSGNRTETSGSNINQHHQ) is disordered. Residues 17-49 (MEENMSNLTSASGDQASVSSGNRTETSGSNINQ) are compositionally biased toward polar residues. Ser82 carries the phosphoserine modification. 2 C2H2-type zinc fingers span residues 92–114 (FICE…KRGH) and 134–164 (YVCP…FRKH). The short motif at 156 to 163 (IKKHFFRK) is the Nuclear localization signal element. The C2H2-type 2; degenerate zinc-finger motif lies at 169–192 (WKCEKCSKKYAVQSDWKAHAKTCG). Zn(2+) contacts are provided by Cys171, Cys174, His187, Cys191, Cys198, Cys200, His213, and Cys217. The CCHC-type 2; atypical zinc finger occupies 196–219 (YKCDCGTLFSRRDSFITHRAFCDA). The interval 206-218 (RRDSFITHRAFCD) is SHR-binding. A disordered region spans residues 235-351 (QASNSPHHHH…PEEEERSSRS (117 aa)). Low complexity-rich tracts occupy residues 248–265 (QQNI…SNSN) and 288–299 (SSNPNPNGNNGN).

It is found in the nucleus. Probable transcription factor. The sequence is that of Protein indeterminate-domain 7 from Arabidopsis thaliana (Mouse-ear cress).